The chain runs to 656 residues: Anion exchange transporter (656 aa).

The Cytoplasmic portion of the chain corresponds to 1–75; the sequence is MTGAKRKKRS…LSFAMLSSVH (75 aa). A helical membrane pass occupies residues 76–96; that stretch reads PVFGLYGSLFPAIIYAIFGMG. Topologically, residues 97–144 are extracellular; it reads RHVATGTFALTSLISANAVERLVPQSSRNLTTQSNSSVLGLSEFELQR. The helical transmembrane segment at 145–165 threads the bilayer; that stretch reads IGVAAAVSFLGGVIQLVMFVL. Glutamine 166 is a topological domain (cytoplasmic). Residues 167 to 187 traverse the membrane as a helical segment; that stretch reads LGSATFLLTEPVISAMTTGAA. Residues 188–199 are Extracellular-facing; it reads THVVTSQVKYLL. A helical membrane pass occupies residues 200–220; the sequence is GIKMPYISGPLGFFYIYAYVF. At 221–222 the chain is on the cytoplasmic side; it reads EN. The chain crosses the membrane as a helical span at residues 223-243; sequence IKSVQLEALLFSLLSIIVLVL. At 244–254 the chain is on the extracellular side; that stretch reads VKELNEQFKRK. The helical transmembrane segment at 255–275 threads the bilayer; that stretch reads IKVVLPVDLVLIIAASFACYC. Topologically, residues 276–306 are cytoplasmic; that stretch reads TNMENTYGLEVVGHIPNGIPPPRAPPMNILS. A helical membrane pass occupies residues 307-327; the sequence is AVLTEAFGVALVGYVASLALA. Residues 328 to 343 lie on the Extracellular side of the membrane; that stretch reads QGSAKKFKYSVDDNQE. A helical transmembrane segment spans residues 344 to 364; it reads FLAHGLSNVIPSFLFCIPSAA. The Cytoplasmic segment spans residues 365–383; sequence AMGRTAGLYSTGAKTQVAC. Transmembrane regions (helical) follow at residues 384-404 and 405-425; these read LISC…LYWL and PMCV…IQFR. The Extracellular segment spans residues 426-448; it reads DLKKYWNVDKIDWGIWISTYIFT. A helical transmembrane segment spans residues 449-469; sequence ICFAANVGLLFGVICTIAIVL. The Cytoplasmic segment spans residues 470–656; the sequence is GRFPRAKTLS…LSKASDHSEV (187 aa). Residues 492 to 641 enclose the STAS domain; sequence TEMHDETSQQ…DSVPAAISII (150 aa). A membrane targeting region spans residues 641-656; it reads IQSNKNLSKASDHSEV.

This sequence belongs to the SLC26A/SulP transporter (TC 2.A.53) family. As to expression, expressed in the Reissner's membrane epithelial cells in the cochlea (at protein level). Expressed in the retinal pigment epithelium (at protein level). Abundantly expressed in parietal cells on the glandular portion of the stomach. Lower levels are observed in the kidney, with expression in the proximal tubule and thick ascending limb of the loop of Henle. Also expressed in distal segments of nephron, in extraglomerular mesagial cells and a subpopulation of intercalated cells of outer medullary collecting ducts. Expressed in the thyroid gland.

The protein resides in the basolateral cell membrane. It localises to the recycling endosome membrane. The protein localises to the apical cell membrane. Its subcellular location is the lateral cell membrane. The catalysed reaction is chloride(in) = chloride(out). It carries out the reaction iodide(out) = iodide(in). It catalyses the reaction bromide(in) = bromide(out). The enzyme catalyses oxalate(in) = oxalate(out). The catalysed reaction is nitrate(in) = nitrate(out). It carries out the reaction sulfate(in) = sulfate(out). It catalyses the reaction hydrogencarbonate(in) = hydrogencarbonate(out). The enzyme catalyses D-gluconate(in) = D-gluconate(out). The catalysed reaction is thiocyanate(in) = thiocyanate(out). It carries out the reaction hydrogencarbonate(in) + chloride(out) = hydrogencarbonate(out) + chloride(in). Its activity is regulated as follows. Regulated by pH. Activity inhibited by all inhibitors of several anion channels and transporters, including 4,4'-Di-isothiocyanatostilbene-2,2'-disulfonic acid (DIDS), diphenylamine-2-carboxylic acid, glybenclamide and 5-Nitro-2-(3-phenylpropyl-amino)benzoic acid. Functionally, acts as an anion channel mediating the transport of chloride, bromide, iodide, nitrate, sulfate, gluconate, thiocyanate and bicarbonate ions. Its permeability towards bicarbonate is weak and increases when pH is above 7. Mediates oxalate transport. Mediates thiocyanate transport in retinal pigment epithelium cells. Mediates iodide transport in the thyroid gland, playing an important role in the synthesis of thyroid hormones and the maintenance of thyroid function. Although it is an anion channel, according to PubMed:12736153 and PubMed:19723628 it has been shown to exhibit chloride-bicarbonate exchanger activity. In Mus musculus (Mouse), this protein is Anion exchange transporter.